Consider the following 433-residue polypeptide: UPF0597 protein DNO_0106 (433 aa).

This sequence belongs to the UPF0597 family.

The polypeptide is UPF0597 protein DNO_0106 (Dichelobacter nodosus (strain VCS1703A)).